Reading from the N-terminus, the 346-residue chain is UDP-3-O-acylglucosamine N-acyltransferase (346 aa).

The Proton acceptor role is filled by His-240.

This sequence belongs to the transferase hexapeptide repeat family. LpxD subfamily. As to quaternary structure, homotrimer.

It catalyses the reaction a UDP-3-O-[(3R)-3-hydroxyacyl]-alpha-D-glucosamine + a (3R)-hydroxyacyl-[ACP] = a UDP-2-N,3-O-bis[(3R)-3-hydroxyacyl]-alpha-D-glucosamine + holo-[ACP] + H(+). It participates in bacterial outer membrane biogenesis; LPS lipid A biosynthesis. Its function is as follows. Catalyzes the N-acylation of UDP-3-O-acylglucosamine using 3-hydroxyacyl-ACP as the acyl donor. Is involved in the biosynthesis of lipid A, a phosphorylated glycolipid that anchors the lipopolysaccharide to the outer membrane of the cell. This chain is UDP-3-O-acylglucosamine N-acyltransferase, found in Bacteroides fragilis (strain YCH46).